The primary structure comprises 296 residues: Phosphatidylglycerol--prolipoprotein diacylglyceryl transferase (296 aa).

A run of 3 helical transmembrane segments spans residues Leu17 to Gly37, Met59 to Tyr79, and Gly97 to Trp117. Arg142 is a binding site for a 1,2-diacyl-sn-glycero-3-phospho-(1'-sn-glycerol). 2 helical membrane passes run Met230–Phe250 and Phe257–Leu277.

The protein belongs to the Lgt family.

It is found in the cell inner membrane. The enzyme catalyses L-cysteinyl-[prolipoprotein] + a 1,2-diacyl-sn-glycero-3-phospho-(1'-sn-glycerol) = an S-1,2-diacyl-sn-glyceryl-L-cysteinyl-[prolipoprotein] + sn-glycerol 1-phosphate + H(+). It participates in protein modification; lipoprotein biosynthesis (diacylglyceryl transfer). Functionally, catalyzes the transfer of the diacylglyceryl group from phosphatidylglycerol to the sulfhydryl group of the N-terminal cysteine of a prolipoprotein, the first step in the formation of mature lipoproteins. This Burkholderia lata (strain ATCC 17760 / DSM 23089 / LMG 22485 / NCIMB 9086 / R18194 / 383) protein is Phosphatidylglycerol--prolipoprotein diacylglyceryl transferase.